A 357-amino-acid chain; its full sequence is Thiamine thiazole synthase, chloroplastic (357 aa).

Residues A102, 123–124 (EQ), G131, and V196 each bind substrate. C233 is subject to 2,3-didehydroalanine (Cys). Substrate-binding positions include D235, H250, M304, and 314 to 316 (RMG).

This sequence belongs to the THI4 family. Homooctamer. It depends on Fe cation as a cofactor. In terms of processing, during the catalytic reaction, a sulfide is transferred from Cys-233 to a reaction intermediate, generating a dehydroalanine residue.

The protein resides in the plastid. It localises to the chloroplast. It carries out the reaction [ADP-thiazole synthase]-L-cysteine + glycine + NAD(+) = [ADP-thiazole synthase]-dehydroalanine + ADP-5-ethyl-4-methylthiazole-2-carboxylate + nicotinamide + 3 H2O + 2 H(+). Involved in biosynthesis of the thiamine precursor thiazole. Catalyzes the conversion of NAD and glycine to adenosine diphosphate 5-(2-hydroxyethyl)-4-methylthiazole-2-carboxylic acid (ADT), an adenylated thiazole intermediate. The reaction includes an iron-dependent sulfide transfer from a conserved cysteine residue of the protein to a thiazole intermediate. The enzyme can only undergo a single turnover, which suggests it is a suicide enzyme. May have additional roles in adaptation to various stress conditions and in DNA damage tolerance. The polypeptide is Thiamine thiazole synthase, chloroplastic (Chlamydomonas reinhardtii (Chlamydomonas smithii)).